Reading from the N-terminus, the 575-residue chain is MSNGQLIYLMVAIAVILVLAYVVAIFLRKRNEGRLEALEERKEELYNLPVNDEVEAVKNMHLIGQSQVAFREWNQKWVDLSLNSFADIENNLFEAEGYNHSFRFLKASHQIDQIESQITLIEEDIAAIRNALADLEKQESKNSGRVLHALDLFEELQHRVAENSEQYGQALDEIEKQLENIQSEFSQFVTLNSSGDPVEAAVILDNTENHILALSHIVDRVPALVTTLSTELPDQLQDLEAGYRKLIDANYHFVETDIEARFHLLYEAFKKNQENIRQLELDNAEYENGQAQEEINALYDIFTREIAAQKVVENLLATLPTYLQHMKENNTLLGEDIARLNKTYLLPETAASHVRRIQTELESFEAAIVEVTSNQEEPTQAYSVLEENLEDLQTQLKDIEDEQISVSERLTQIEKDDINARQKANVYVNRLHTIKRYMEKRNLPGIPQTFLKLFFTASNNTEDLMVELEQKMINIESVTRVLEIATNDMEALETETYNIVQYATLTEQLLQYSNRYRSFDERIQEAFNEALDIFEKEFDYHASFDKISQALEVAEPGVTNRFVTSYEKTRETIRF.

Residues 1–8 (MSNGQLIY) are Extracellular-facing. Residues 9-27 (LMVAIAVILVLAYVVAIFL) traverse the membrane as a helical segment. At 28–575 (RKRNEGRLEA…YEKTRETIRF (548 aa)) the chain is on the cytoplasmic side. Coiled-coil stretches lie at residues 105–191 (LKAS…FVTL), 265–301 (LYEA…LYDI), 354–416 (VRRI…IEKD), and 456–526 (TASN…IQEA).

The protein belongs to the EzrA family.

The protein resides in the cell membrane. Its function is as follows. Negative regulator of FtsZ ring formation; modulates the frequency and position of FtsZ ring formation. Inhibits FtsZ ring formation at polar sites. Interacts either with FtsZ or with one of its binding partners to promote depolymerization. In Streptococcus pneumoniae (strain ATCC BAA-255 / R6), this protein is Septation ring formation regulator EzrA.